Here is a 258-residue protein sequence, read N- to C-terminus: Spindlin-3 (258 aa).

The interval 1-23 (MKTPFGKAAAGQRSRTGAGHGSV) is disordered. 3 tudor-like domain regions span residues 50–99 (VGCR…LELH), 129–178 (VGKA…YQLL), and 210–255 (VGKQ…YDLV). 2 histone H3K4me3 and H3R8me2a binding regions span residues Glu-138 and 246–248 (DFH).

The protein belongs to the SPIN/STSY family. Interacts with C11orf84/SPINDOC.

Its function is as follows. Exhibits H3K4me3-binding activity. The polypeptide is Spindlin-3 (SPIN3) (Homo sapiens (Human)).